We begin with the raw amino-acid sequence, 462 residues long: L-seryl-tRNA(Sec) selenium transferase (462 aa).

Position 293 is an N6-(pyridoxal phosphate)lysine (lysine 293).

Belongs to the SelA family. Pyridoxal 5'-phosphate is required as a cofactor.

The protein resides in the cytoplasm. The catalysed reaction is L-seryl-tRNA(Sec) + selenophosphate + H(+) = L-selenocysteinyl-tRNA(Sec) + phosphate. It participates in aminoacyl-tRNA biosynthesis; selenocysteinyl-tRNA(Sec) biosynthesis; selenocysteinyl-tRNA(Sec) from L-seryl-tRNA(Sec) (bacterial route): step 1/1. Its function is as follows. Converts seryl-tRNA(Sec) to selenocysteinyl-tRNA(Sec) required for selenoprotein biosynthesis. The polypeptide is L-seryl-tRNA(Sec) selenium transferase (Clostridium botulinum (strain 657 / Type Ba4)).